Reading from the N-terminus, the 155-residue chain is SsrA-binding protein (155 aa).

Positions 132 to 147 (KRESIKRREQDRDIKR) are enriched in basic and acidic residues. The tract at residues 132 to 155 (KRESIKRREQDRDIKRQMKQFNGR) is disordered.

Belongs to the SmpB family.

The protein resides in the cytoplasm. Functionally, required for rescue of stalled ribosomes mediated by trans-translation. Binds to transfer-messenger RNA (tmRNA), required for stable association of tmRNA with ribosomes. tmRNA and SmpB together mimic tRNA shape, replacing the anticodon stem-loop with SmpB. tmRNA is encoded by the ssrA gene; the 2 termini fold to resemble tRNA(Ala) and it encodes a 'tag peptide', a short internal open reading frame. During trans-translation Ala-aminoacylated tmRNA acts like a tRNA, entering the A-site of stalled ribosomes, displacing the stalled mRNA. The ribosome then switches to translate the ORF on the tmRNA; the nascent peptide is terminated with the 'tag peptide' encoded by the tmRNA and targeted for degradation. The ribosome is freed to recommence translation, which seems to be the essential function of trans-translation. This Streptococcus mutans serotype c (strain ATCC 700610 / UA159) protein is SsrA-binding protein.